Here is a 228-residue protein sequence, read N- to C-terminus: 2,3-bisphosphoglycerate-dependent phosphoglycerate mutase (228 aa).

Substrate-binding positions include 8 to 15 (RHGQSVWN), 21 to 22 (SG), Arg58, 111 to 114 (ERMY), Lys122, 138 to 139 (RR), and 182 to 183 (GN). The active-site Tele-phosphohistidine intermediate is His9. Glu111 (proton donor/acceptor) is an active-site residue.

This sequence belongs to the phosphoglycerate mutase family. BPG-dependent PGAM subfamily.

The catalysed reaction is (2R)-2-phosphoglycerate = (2R)-3-phosphoglycerate. It functions in the pathway carbohydrate degradation; glycolysis; pyruvate from D-glyceraldehyde 3-phosphate: step 3/5. Functionally, catalyzes the interconversion of 2-phosphoglycerate and 3-phosphoglycerate. The polypeptide is 2,3-bisphosphoglycerate-dependent phosphoglycerate mutase (Chlamydia pneumoniae (Chlamydophila pneumoniae)).